We begin with the raw amino-acid sequence, 688 residues long: Polyribonucleotide nucleotidyltransferase (688 aa).

Asp-484 and Asp-490 together coordinate Mg(2+). One can recognise a KH domain in the interval 550 to 609; the sequence is PQTEIFNVAPDKIIEIIGQGGRVIKEIVEKFEVKIDLNTPSGEVKIMGNKERVLKTKEFI. In terms of domain architecture, S1 motif spans 626–688; that stretch reads DEVLEAQVKR…NKGKIALDLA (63 aa).

The protein belongs to the polyribonucleotide nucleotidyltransferase family. The cofactor is Mg(2+).

It localises to the cytoplasm. The catalysed reaction is RNA(n+1) + phosphate = RNA(n) + a ribonucleoside 5'-diphosphate. Functionally, involved in mRNA degradation. Catalyzes the phosphorolysis of single-stranded polyribonucleotides processively in the 3'- to 5'-direction. In Helicobacter pylori (strain J99 / ATCC 700824) (Campylobacter pylori J99), this protein is Polyribonucleotide nucleotidyltransferase.